The chain runs to 364 residues: DNA replication and repair protein RecF (364 aa).

Glycine 30–threonine 37 provides a ligand contact to ATP.

It belongs to the RecF family.

It is found in the cytoplasm. The RecF protein is involved in DNA metabolism; it is required for DNA replication and normal SOS inducibility. RecF binds preferentially to single-stranded, linear DNA. It also seems to bind ATP. In Stenotrophomonas maltophilia (strain K279a), this protein is DNA replication and repair protein RecF.